Reading from the N-terminus, the 81-residue chain is Putative defensin-like protein 188 (81 aa).

Residues 1–19 (MKNSSLLFILIVVFVISSS) form the signal peptide. Cystine bridges form between C31-C81, C37-C57, C43-C75, and C47-C77.

This sequence belongs to the DEFL family.

Its subcellular location is the secreted. This chain is Putative defensin-like protein 188 (LCR41), found in Arabidopsis thaliana (Mouse-ear cress).